A 109-amino-acid polypeptide reads, in one-letter code: Staphostatin B (109 aa).

A binds to staphopain B region spans residues 97-101; sequence IGTSR.

It belongs to the protease inhibitor I57 (SspC) family. In terms of assembly, forms a stable non-covalent complex with prematurely activated/folded SspB.

Its subcellular location is the cytoplasm. In terms of biological role, specifically inhibits the cysteine protease staphopain B (SspB) by blocking the active site of the enzyme. Probably required to protect cytoplasmic proteins from being degraded by prematurely activated/folded prostaphopain B. Also involved in growth capacity, viability and bacterial morphology. In Staphylococcus aureus (strain NCTC 8325 / PS 47), this protein is Staphostatin B (sspC).